The chain runs to 364 residues: 4-hydroxythreonine-4-phosphate dehydrogenase (364 aa).

Substrate contacts are provided by His-148 and Thr-149. His-177, His-216, and His-301 together coordinate a divalent metal cation. 3 residues coordinate substrate: Lys-309, Asn-318, and Arg-327.

It belongs to the PdxA family. Homodimer. Zn(2+) serves as cofactor. Mg(2+) is required as a cofactor. The cofactor is Co(2+).

The protein resides in the cytoplasm. It catalyses the reaction 4-(phosphooxy)-L-threonine + NAD(+) = 3-amino-2-oxopropyl phosphate + CO2 + NADH. The protein operates within cofactor biosynthesis; pyridoxine 5'-phosphate biosynthesis; pyridoxine 5'-phosphate from D-erythrose 4-phosphate: step 4/5. Its function is as follows. Catalyzes the NAD(P)-dependent oxidation of 4-(phosphooxy)-L-threonine (HTP) into 2-amino-3-oxo-4-(phosphooxy)butyric acid which spontaneously decarboxylates to form 3-amino-2-oxopropyl phosphate (AHAP). This is 4-hydroxythreonine-4-phosphate dehydrogenase from Campylobacter jejuni subsp. jejuni serotype O:2 (strain ATCC 700819 / NCTC 11168).